Reading from the N-terminus, the 490-residue chain is UDP-glycosyltransferase 84A1 (490 aa).

H30 serves as the catalytic Proton acceptor. H30 is a binding site for an anthocyanidin. UDP-alpha-D-glucose contacts are provided by Q358, H373, W376, N377, S378, and E381. G396 provides a ligand contact to an anthocyanidin. UDP-alpha-D-glucose-binding residues include D397 and Q398.

The protein belongs to the UDP-glycosyltransferase family. As to expression, expressed in roots, flowers and siliques.

The enzyme catalyses (E)-4-coumarate + UDP-alpha-D-glucose = 4-O-(beta-D-glucosyl)-trans-4-coumarate + UDP + H(+). It carries out the reaction (E)-ferulate + UDP-alpha-D-glucose = 1-O-[(E)-feruloyl]-beta-D-glucose + UDP. The catalysed reaction is (E)-caffeate + UDP-alpha-D-glucose = 1-O-[(E)-caffeoyl]-beta-D-glucose + UDP. It catalyses the reaction (E)-sinapate + UDP-alpha-D-glucose = 1-O-(trans-sinapoyl)-beta-D-glucose + UDP. The enzyme catalyses (E)-cinnamate + UDP-alpha-D-glucose = 1-O-(trans-cinnamoyl)-beta-D-glucose + UDP. Its function is as follows. UDP-glucosyltransferase that forms glucose esters with phenylpropanoids. Glucosylates 4-coumarate, ferulate, caffeate, sinapate and cinnamate. Can glucosylate the phytotoxic xenobiotic compound 2,4,5-trichlorophenol (TCP). The polypeptide is UDP-glycosyltransferase 84A1 (Arabidopsis thaliana (Mouse-ear cress)).